The primary structure comprises 78 residues: Gas vesicle protein A (78 aa).

The protein belongs to the gas vesicle GvpA family. As to quaternary structure, the gas vesicle shell is 2 nm thick and consists of a single layer of this protein. It forms helical ribs nearly perpendicular to the long axis of the vesicle.

It localises to the gas vesicle shell. In terms of biological role, gas vesicles are hollow, gas filled proteinaceous nanostructures found in some microorganisms. During planktonic growth they allow positioning of the organism at a favorable depth for light or nutrient acquisition. GvpA forms the protein shell. The sequence is that of Gas vesicle protein A from Halorubrum vacuolatum (Natronobacterium vacuolatum).